Reading from the N-terminus, the 209-residue chain is Large ribosomal subunit protein uL3 (209 aa).

Belongs to the universal ribosomal protein uL3 family. As to quaternary structure, part of the 50S ribosomal subunit. Forms a cluster with proteins L14 and L19.

Its function is as follows. One of the primary rRNA binding proteins, it binds directly near the 3'-end of the 23S rRNA, where it nucleates assembly of the 50S subunit. This chain is Large ribosomal subunit protein uL3, found in Moorella thermoacetica (strain ATCC 39073 / JCM 9320).